The following is a 337-amino-acid chain: MSDLPFTLDQLRILKAIAVEGSFKRAADSLYVSQPAVSLQVQNLERQLDVPLFDRGGRRAQLTEAGHLLLNYGEKILSLCQETCRAIEDLQNLQGGTLIVGASQTTGTYLLPKMIGMFRQKYPDVAVQLHVHSTRRTAWSVANGQVDLAIIGGEIPGELTESLEIIPYAEDELALILPVFHPFTKQETIQKEDLYKLQFITLDSQSTIRKVIDQVLSRSEIDTRRFKIEMELNSIEAIKNAVQSGLGAAFVSTSAIAKELQMGVLHCTPIDGVVIKRTLWLIFNPNRYRSKAAEAFSQEILPQFATPDWNQDVLKLVQKKLVVNVLDAAIPNTSDDG.

In terms of domain architecture, HTH lysR-type spans 6-63 (FTLDQLRILKAIAVEGSFKRAADSLYVSQPAVSLQVQNLERQLDVPLFDRGGRRAQLT). Residues 23–42 (FKRAADSLYVSQPAVSLQVQ) constitute a DNA-binding region (H-T-H motif).

Belongs to the LysR transcriptional regulatory family.

Functionally, trans-acting transcriptional regulator of RuBisCO genes (rbcL and rbcS) expression. The chain is Probable RuBisCO transcriptional regulator (rbcR) from Trichormus variabilis (strain ATCC 29413 / PCC 7937) (Anabaena variabilis).